Here is a 327-residue protein sequence, read N- to C-terminus: Olfactory receptor 226 (327 aa).

The Extracellular segment spans residues 1-26 (MERRNHSGRVSEFVLLGFPAPAPLRV). N-linked (GlcNAc...) asparagine glycosylation is present at asparagine 5. The chain crosses the membrane as a helical span at residues 27–50 (LLFFLSLLAYVLVLTENMLIIIAI). Topologically, residues 51 to 58 (RNHPTLHK) are cytoplasmic. Residues 59–80 (PMYFFLANMSFLEIWYVTVTIP) traverse the membrane as a helical segment. The Extracellular segment spans residues 81–104 (KMLAGFIGSKENHGQLISFEACMT). An intrachain disulfide couples cysteine 102 to cysteine 194. Residues 105-125 (QLYFFLGLGCTECVLLAVMAY) form a helical membrane-spanning segment. The Cytoplasmic portion of the chain corresponds to 126–144 (DRYVAICHPLHYPVIVSSR). The chain crosses the membrane as a helical span at residues 145–163 (LCVQMAAGSWAGGFGISMV). At 164–201 (KVFLISRLSYCGPNTINHFFCDVSPLLNLSCTDMSTAE) the chain is on the extracellular side. The helical transmembrane segment at 202 to 224 (LTDFVLAIFILLGPLSVTGASYM) threads the bilayer. The Cytoplasmic portion of the chain corresponds to 225-241 (AITGAVMRIPSAAGRHK). Residues 242–265 (AFSTCASHLTVVIIFYAASIFIYA) form a helical membrane-spanning segment. Residues 266-277 (RPKALSAFDTNK) lie on the Extracellular side of the membrane. The helical transmembrane segment at 278–297 (LVSVLYAVIVPLFNPIIYCL) threads the bilayer. Residues 298–327 (RNQDVKRALRRTLHLAQDQEANTNKGSKNG) lie on the Cytoplasmic side of the membrane.

Belongs to the G-protein coupled receptor 1 family. In terms of tissue distribution, olfactory epithelium.

The protein localises to the cell membrane. Functionally, odorant receptor. In Rattus norvegicus (Rat), this protein is Olfactory receptor 226 (Olr226).